The primary structure comprises 321 residues: Tetraacyldisaccharide 4'-kinase (321 aa).

An ATP-binding site is contributed by 54-61 (SVGGTGKT).

The protein belongs to the LpxK family.

It carries out the reaction a lipid A disaccharide + ATP = a lipid IVA + ADP + H(+). It participates in glycolipid biosynthesis; lipid IV(A) biosynthesis; lipid IV(A) from (3R)-3-hydroxytetradecanoyl-[acyl-carrier-protein] and UDP-N-acetyl-alpha-D-glucosamine: step 6/6. Functionally, transfers the gamma-phosphate of ATP to the 4'-position of a tetraacyldisaccharide 1-phosphate intermediate (termed DS-1-P) to form tetraacyldisaccharide 1,4'-bis-phosphate (lipid IVA). This is Tetraacyldisaccharide 4'-kinase from Rickettsia bellii (strain OSU 85-389).